Here is a 272-residue protein sequence, read N- to C-terminus: uncharacterized protein (272 aa).

The disordered stretch occupies residues 193-250 (AFLLPNNSKGVEKSEENEDGVTDNDSSNVNSSTNESPNPTDINVCSNDDATDNTENNL). Low complexity predominate over residues 215–233 (DNDSSNVNSSTNESPNPTD). The span at 235–248 (NVCSNDDATDNTEN) shows a compositional bias: polar residues.

It belongs to the pal1 family.

It is found in the cytoplasm. The protein localises to the nucleus. This is an uncharacterized protein from Schizosaccharomyces pombe (strain 972 / ATCC 24843) (Fission yeast).